We begin with the raw amino-acid sequence, 162 residues long: UPF0114 protein Pput_0713 (162 aa).

4 helical membrane passes run 15 to 35, 53 to 73, 109 to 126, and 136 to 156; these read LLAPIYFGLSLGLLALALKFF, LILVILSLIDMSLVGGLLVMV, VAASIVAISSIHLLRVFM, and LMWYVIIHMTFVVSAFCMGYL.

It belongs to the UPF0114 family.

It localises to the cell membrane. This chain is UPF0114 protein Pput_0713, found in Pseudomonas putida (strain ATCC 700007 / DSM 6899 / JCM 31910 / BCRC 17059 / LMG 24140 / F1).